The chain runs to 116 residues: Large ribosomal subunit protein bL20 (116 aa).

Belongs to the bacterial ribosomal protein bL20 family.

Functionally, binds directly to 23S ribosomal RNA and is necessary for the in vitro assembly process of the 50S ribosomal subunit. It is not involved in the protein synthesizing functions of that subunit. The polypeptide is Large ribosomal subunit protein bL20 (Nitratiruptor sp. (strain SB155-2)).